Here is a 464-residue protein sequence, read N- to C-terminus: ATP-dependent protease ATPase subunit HslU (464 aa).

ATP is bound by residues isoleucine 22, 64 to 69 (GVGKTE), aspartate 275, glutamate 340, and arginine 412.

This sequence belongs to the ClpX chaperone family. HslU subfamily. A double ring-shaped homohexamer of HslV is capped on each side by a ring-shaped HslU homohexamer. The assembly of the HslU/HslV complex is dependent on binding of ATP.

The protein resides in the cytoplasm. Functionally, ATPase subunit of a proteasome-like degradation complex; this subunit has chaperone activity. The binding of ATP and its subsequent hydrolysis by HslU are essential for unfolding of protein substrates subsequently hydrolyzed by HslV. HslU recognizes the N-terminal part of its protein substrates and unfolds these before they are guided to HslV for hydrolysis. The chain is ATP-dependent protease ATPase subunit HslU from Cytophaga hutchinsonii (strain ATCC 33406 / DSM 1761 / CIP 103989 / NBRC 15051 / NCIMB 9469 / D465).